Reading from the N-terminus, the 307-residue chain is NAD kinase (307 aa).

Asp-78 serves as the catalytic Proton acceptor. NAD(+)-binding positions include 78–79 (DG), His-83, 154–155 (NE), Arg-165, Arg-182, Asp-184, and Gln-255.

Belongs to the NAD kinase family. It depends on a divalent metal cation as a cofactor.

The protein resides in the cytoplasm. The catalysed reaction is NAD(+) + ATP = ADP + NADP(+) + H(+). Functionally, involved in the regulation of the intracellular balance of NAD and NADP, and is a key enzyme in the biosynthesis of NADP. Catalyzes specifically the phosphorylation on 2'-hydroxyl of the adenosine moiety of NAD to yield NADP. The sequence is that of NAD kinase from Halorhodospira halophila (strain DSM 244 / SL1) (Ectothiorhodospira halophila (strain DSM 244 / SL1)).